The following is a 141-amino-acid chain: Large ribosomal subunit protein uL11 (141 aa).

Belongs to the universal ribosomal protein uL11 family. As to quaternary structure, part of the ribosomal stalk of the 50S ribosomal subunit. Interacts with L10 and the large rRNA to form the base of the stalk. L10 forms an elongated spine to which L12 dimers bind in a sequential fashion forming a multimeric L10(L12)X complex. In terms of processing, one or more lysine residues are methylated.

Forms part of the ribosomal stalk which helps the ribosome interact with GTP-bound translation factors. This Chlamydia trachomatis serovar L2 (strain ATCC VR-902B / DSM 19102 / 434/Bu) protein is Large ribosomal subunit protein uL11.